The sequence spans 444 residues: Presenilin sel-12 (444 aa).

Over 1–45 the chain is Cytoplasmic; it reads MPSTRRQQEGGGADAETHTVYGTNLITNRNSQEDENVVEEAELKY. A helical membrane pass occupies residues 46-66; the sequence is GASHVIHLFVPVSLCMALVVF. Over 67-101 the chain is Lumenal; sequence TMNTITFYSQNNGRHLLYTPFVRETDSIVEKGLMS. A helical transmembrane segment spans residues 102–122; that stretch reads LGNALVMLCVVVLMTVLLIVF. Residues 123-130 are Cytoplasmic-facing; the sequence is YKYKFYKL. A helical transmembrane segment spans residues 131-151; it reads IHGWLIVSSFLLLFLFTTIYV. The Lumenal segment spans residues 152–163; that stretch reads QEVLKSFDVSPS. A helical membrane pass occupies residues 164 to 184; sequence ALLVLFGLGNYGVLGMMCIHW. Residues 185-189 are Cytoplasmic-facing; the sequence is KGPLR. Residues 190 to 210 form a helical membrane-spanning segment; it reads LQQFYLITMSALMALVFIKYL. The Lumenal segment spans residues 211–212; it reads PE. Residues 213–233 traverse the membrane as a helical segment; sequence WTVWFVLFVISVWDLVAVLTP. Residue Asp-226 is part of the active site. Topologically, residues 234 to 359 are cytoplasmic; sequence KGPLRYLVET…RHEEEERGVK (126 aa). Residues 275–331 form a disordered region; the sequence is TDPREPTSSDSNTSTAFPGEASCSSETPKRPKVKRIPQKVQIESNTTASTTQNSGVR. Polar residues-rich tracts occupy residues 282-300 and 315-329; these read SSDSNTSTAFPGEASCSSE and QIESNTTASTTQNSG. A helical transmembrane segment spans residues 360 to 380; it reads LGLGDFIFYSVLLGKASSYFD. Asp-364 is a catalytic residue. The Lumenal portion of the chain corresponds to 381-384; that stretch reads WNTT. A helical membrane pass occupies residues 385–405; it reads IACYVAILIGLCFTLVLLAVF. Over 406–413 the chain is Cytoplasmic; that stretch reads KRALPALP. The short motif at 410–412 is the PAL element; sequence PAL. The helical intramembrane region spans 414–434; it reads ISIFSGLIFYFCTRWIITPFV. The Cytoplasmic segment spans residues 435–444; that stretch reads TQVSQKCLLY.

Belongs to the peptidase A22A family. In terms of assembly, homodimer. Component of the gamma-secretase complex, a complex probably composed of the presenilin homodimer (sel-12, hop-1 or spe-4), nicastrin (aph-2), aph-1 and pen-2. Interacts with sel-10. As to expression, expressed in most neurons.

It localises to the endoplasmic reticulum membrane. It is found in the golgi apparatus membrane. Its function is as follows. Probable catalytic subunit of the gamma-secretase complex, an endoprotease complex that catalyzes the intramembrane cleavage of integral membrane proteins such as Notch receptors (lin-12 or glp-1). Provides the major presenilin function compared to hop-1 and spe-4. Required cell-autonomously for correct neurite connectivity of the AIY cholinergic interneurons and their correct functioning in thermotaxis. Required for mesodermal patterning of muscle function. Promotes basement membrane gap formation during tissue remodeling. This is Presenilin sel-12 from Caenorhabditis elegans.